The primary structure comprises 493 residues: Alpha-amylase-related protein (493 aa).

A signal peptide spans 1-19 (MFKFALALTLCLAGSLSLA). Gln-20 is modified (pyrrolidone carboxylic acid). The cysteines at positions 47 and 103 are disulfide-linked. Residues Asn-117, Gln-168, and Asp-177 each coordinate Ca(2+). Cys-156 and Cys-170 are joined by a disulfide. A chloride-binding site is contributed by Arg-205. The active-site Nucleophile is Asp-207. His-211 provides a ligand contact to Ca(2+). The active-site Proton donor is the Glu-244. Residues Asn-307 and Arg-342 each coordinate chloride. 3 disulfides stabilise this stretch: Cys-375/Cys-381, Cys-417/Cys-440, and Cys-447/Cys-459.

This sequence belongs to the glycosyl hydrolase 13 family. Monomer. Requires Ca(2+) as cofactor. Chloride serves as cofactor.

The protein resides in the secreted. It catalyses the reaction Endohydrolysis of (1-&gt;4)-alpha-D-glucosidic linkages in polysaccharides containing three or more (1-&gt;4)-alpha-linked D-glucose units.. The chain is Alpha-amylase-related protein (Amyrel) from Drosophila elegans (Fruit fly).